Consider the following 287-residue polypeptide: MANITDFTEKQFEDRLEKNVERLTKNRLAVESPTAFLLGGQPGSGKTSLRSAISEETQGNVVIIDNDTFKQQHPNFDELVKLYEKDVVKYVTPYSNRMTEAIISRLRDKGYNLVIEGTGRTTDVPIQTATMLQAKDYETKMYVMAVPKINSYLGTIERYETMYADDPMTARATPKQAHDIVVKNLPTNLETLHKTGLFSDIRLYNREGVKLYSSLETPSISPKETLERELNRKVSGKEIQPTLERIEQKMVQNQHQETPEFKAIQQKMESLQPPTPPIPKTPKLPGI.

An ATP-binding site is contributed by 40 to 47 (GQPGSGKT). The segment at 250 to 287 (MVQNQHQETPEFKAIQQKMESLQPPTPPIPKTPKLPGI) is disordered. The span at 273–287 (PPTPPIPKTPKLPGI) shows a compositional bias: pro residues.

Belongs to the zeta toxin family. In terms of assembly, in the presence of the epsilon antitoxin, forms an inactive PezA(2)PezT(2) heterotetramer.

It carries out the reaction UDP-N-acetyl-alpha-D-glucosamine + ATP = UDP-N-acetyl-alpha-D-glucosamine 3'-phosphate + ADP + H(+). Functionally, toxic component of a type II toxin-antitoxin (TA) system. Phosphorylates UDP-N-acetyl-D-glucosamine (UNAG) on the 3'-hydroxyl group of the N-acetyl-D-glucosamine moiety, yielding UNAG-3P. UNAG-3P inhibits MurA, the first committed step in cell wall synthesis, which is then blocked. Phosphorylation is inhibited by cognate epsilon antitoxin. Part of a postsegregational killing (PSK) system involved in the killing of plasmid-free cells. The zeta toxin induces programmed cell death. This is Toxin zeta from Streptococcus agalactiae.